The primary structure comprises 530 residues: Phosphoenolpyruvate carboxykinase (ATP) (530 aa).

Substrate contacts are provided by arginine 60, tyrosine 195, and lysine 201. Residues lysine 201, histidine 221, and 237–245 contribute to the ATP site; that span reads GLSGTGKTT. 2 residues coordinate Mn(2+): lysine 201 and histidine 221. Aspartate 258 serves as a coordination point for Mn(2+). Glutamate 286, arginine 324, and serine 449 together coordinate ATP. Arginine 324 contributes to the substrate binding site.

This sequence belongs to the phosphoenolpyruvate carboxykinase (ATP) family. Mn(2+) is required as a cofactor.

It is found in the cytoplasm. It carries out the reaction oxaloacetate + ATP = phosphoenolpyruvate + ADP + CO2. It participates in carbohydrate biosynthesis; gluconeogenesis. In terms of biological role, involved in the gluconeogenesis. Catalyzes the conversion of oxaloacetate (OAA) to phosphoenolpyruvate (PEP) through direct phosphoryl transfer between the nucleoside triphosphate and OAA. This is Phosphoenolpyruvate carboxykinase (ATP) from Geotalea uraniireducens (strain Rf4) (Geobacter uraniireducens).